We begin with the raw amino-acid sequence, 760 residues long: Cyclin-D-binding Myb-like transcription factor 1 (760 aa).

The tract at residues 1 to 237 (MSTVEEDSDT…TPEEIEKLKE (237 aa)) is interaction with CCND2. The disordered stretch occupies residues 24–63 (DTDGNLILHCPQNDPDEIDSEDSTEPPHKRLCLSSEDDQS). The span at 37-47 (DPDEIDSEDST) shows a compositional bias: acidic residues. The segment at 87–170 (VTMTATTEVA…IDILMNNIER (84 aa)) is required for transcriptional activation. The required for DNA-binding stretch occupies residues 87 to 458 (VTMTATTEVA…DNTAISPSPM (372 aa)). An interaction with CCND1, CCND2 and CCND3 region spans residues 176-690 (GIKDATEIIF…PTIVHQVHQT (515 aa)). Residues 225–263 (GKYTPEEIEKLKELRIKHGNDWATIGAALGRSASSVKDR) enclose the Myb-like 1 domain. Positions 268-333 (KDTCNTGKWT…KWLNYLNWKQ (66 aa)) constitute an HTH myb-type domain. A DNA-binding region (H-T-H motif) is located at residues 306-329 (WAAVAERVGTRSEKQCRSKWLNYL). The 50-residue stretch at 339-388 (WTKEDEINLILRIAELDVADENDINWDLLAEGWSSVRSPQWLRSKWWTIK) folds into the Myb-like 2 domain. Residues 459 to 760 (AALQIPVQIT…KDVEDLVNCH (302 aa)) are required for transcriptional activation. 2 disordered regions span residues 593–614 (DSDLHSSDFPEPPDALEADTFP) and 738–760 (IGSSLGSPVSEDSKDVEDLVNCH).

This sequence belongs to the DMTF1 family. Interacts with the D-type cyclins CCND1, CCND2 and CCND3. Interaction with D-type cyclins may modulate transcriptional activation by this protein. Post-translationally, phosphorylated by the cyclin-D2/CDK4, cyclin-D3/CDK4 and cyclin-D2/CDK6 complexes and to a lesser extent by the cyclin-D1/CDK4 complex.

It is found in the nucleus. Functionally, transcriptional activator which activates the CDKN2A/ARF locus in response to Ras-Raf signaling, thereby promoting p53/TP53-dependent growth arrest. Binds to the consensus sequence 5'-CCCG[GT]ATGT-3'. The protein is Cyclin-D-binding Myb-like transcription factor 1 (Dmtf1) of Rattus norvegicus (Rat).